We begin with the raw amino-acid sequence, 259 residues long: Phosphate import ATP-binding protein PstB (259 aa).

Positions A10–I254 constitute an ABC transporter domain. Position 43-50 (G43–S50) interacts with ATP.

Belongs to the ABC transporter superfamily. Phosphate importer (TC 3.A.1.7) family. In terms of assembly, the complex is composed of two ATP-binding proteins (PstB), two transmembrane proteins (PstC and PstA) and a solute-binding protein (PstS).

The protein localises to the cell inner membrane. It carries out the reaction phosphate(out) + ATP + H2O = ADP + 2 phosphate(in) + H(+). Its function is as follows. Part of the ABC transporter complex PstSACB involved in phosphate import. Responsible for energy coupling to the transport system. This Methylobacillus flagellatus (strain ATCC 51484 / DSM 6875 / VKM B-1610 / KT) protein is Phosphate import ATP-binding protein PstB.